Consider the following 159-residue polypeptide: Nucleoside diphosphate kinase (159 aa).

ATP-binding residues include Lys-13, Phe-61, Arg-89, Thr-95, Arg-106, and Asn-116. His-119 functions as the Pros-phosphohistidine intermediate in the catalytic mechanism.

Belongs to the NDK family. Mg(2+) is required as a cofactor.

The protein localises to the cytoplasm. The catalysed reaction is a 2'-deoxyribonucleoside 5'-diphosphate + ATP = a 2'-deoxyribonucleoside 5'-triphosphate + ADP. It carries out the reaction a ribonucleoside 5'-diphosphate + ATP = a ribonucleoside 5'-triphosphate + ADP. Major role in the synthesis of nucleoside triphosphates other than ATP. The ATP gamma phosphate is transferred to the NDP beta phosphate via a ping-pong mechanism, using a phosphorylated active-site intermediate. In Halorubrum lacusprofundi (strain ATCC 49239 / DSM 5036 / JCM 8891 / ACAM 34), this protein is Nucleoside diphosphate kinase.